Reading from the N-terminus, the 664-residue chain is MADAFDPSDTRPDELAAVARQKLLVVLGQLQTYIFQVELLKRCDPQVARHQIGKLKLNALQVRAVSRHFMEGMSSQAATLITPLTLALELSLEYARREGEKLLEALNDLGERSSPVAYFEGTMGLARGCPHHQAVKLATYGGEIDKELCFLHDVENFLKQMNYCHLITPASAAAEALVSVKAFLARTVGSELIVPPEISDPSHPCHVCFEELCVTANQGATASRRLAGKICDHVTQQARVRLDADEMRRNLPHVVGLSEARRARALHALEVSSKMTEANSGGPAEAPGPAAAQEREASALLDAHHVFKSAPPGLYAVSELRFWLSSGDRTSGSTVDAFADNLSALAERERRYETGAVAVELAAFGRRGEHFDRTFGDRVASLDMVDALFVGGQSAAPDDQIEALVRACYNHHLSAPVLRQLAGSEHGDAEALRSALEGLHAAEDPPGDGNAEKEARRAPSLGGGPEDDWAALAARAAADVGARRRLYADRLTKRSLASLGRCVREQRGELEKMLRVSTYGEVLPTVFAAVCNGFAARTRFCELTARAGTVIDNRGNPDTFDTHRFMRASLMRHRVDPALLPGITHQFFELVNGPLFDHATHGFAQPPNTALYFSVENVGLLPHLKEELARFMMGKADSDWAISEFQKFYHFDGTSGITPTQRIA.

The C3H1-type zinc-finger motif lies at 205–233 (CHVCFEELCVTANQGATASRRLAGKICDH). Disordered stretches follow at residues 273–295 (SKMT…AQER) and 440–466 (HAAE…GGPE). A compositionally biased stretch (low complexity) spans 281–292 (GGPAEAPGPAAA).

The protein belongs to the herpesviridae TRM1 protein family. As to quaternary structure, associates with TRM2 and TRM3 to form the tripartite terminase complex. Interacts with portal protein.

It is found in the host nucleus. Functionally, component of the molecular motor that translocates viral genomic DNA in empty capsid during DNA packaging. Forms a tripartite terminase complex together with TRM2 and TRM3 in the host cytoplasm. Once the complex reaches the host nucleus, it interacts with the capsid portal vertex. This portal forms a ring in which genomic DNA is translocated into the capsid. TRM1 carries an endonuclease activity that plays an important role for the cleavage of concatemeric viral DNA into unit length genomes. The chain is Tripartite terminase subunit 1 from Bos taurus (Bovine).